The chain runs to 115 residues: Parathyroid hormone (115 aa).

The signal sequence occupies residues 1 to 25; that stretch reads MIPAKDMAKVMIVMLAICFLTKSDG. Positions 26-31 are excised as a propeptide; it reads KSVKKR. The segment at 51–69 is important for receptor binding; it reads RVEWLRKKLQDVHNFVALG. Positions 73–115 are disordered; the sequence is APRDAGSQRPRKKEDNVLVESHEKSLGEADKADVNVLTKAKSQ. Residues 84 to 105 show a composition bias toward basic and acidic residues; the sequence is KKEDNVLVESHEKSLGEADKAD.

It belongs to the parathyroid hormone family. Interacts with PTH1R (via N-terminal extracellular domain).

The protein localises to the secreted. Functionally, parathyroid hormone elevates calcium level by dissolving the salts in bone and preventing their renal excretion. Acts by binding to its receptor, PTH1R, activating G protein-coupled receptor signaling. Stimulates [1-14C]-2-deoxy-D-glucose (2DG) transport and glycogen synthesis in osteoblastic cells. This chain is Parathyroid hormone, found in Homo sapiens (Human).